The primary structure comprises 672 residues: DNA ligase (672 aa).

NAD(+) is bound by residues 30-34 (DAVYD), 79-80 (SL), and E110. The N6-AMP-lysine intermediate role is filled by K112. NAD(+)-binding residues include R133, E170, K287, and K311. Residues C405, C408, C423, and C429 each contribute to the Zn(2+) site. One can recognise a BRCT domain in the interval 590 to 672 (ADELPLSGKT…IALLTEHGAI (83 aa)).

It belongs to the NAD-dependent DNA ligase family. LigA subfamily. The cofactor is Mg(2+). Requires Mn(2+) as cofactor.

It catalyses the reaction NAD(+) + (deoxyribonucleotide)n-3'-hydroxyl + 5'-phospho-(deoxyribonucleotide)m = (deoxyribonucleotide)n+m + AMP + beta-nicotinamide D-nucleotide.. DNA ligase that catalyzes the formation of phosphodiester linkages between 5'-phosphoryl and 3'-hydroxyl groups in double-stranded DNA using NAD as a coenzyme and as the energy source for the reaction. It is essential for DNA replication and repair of damaged DNA. This chain is DNA ligase, found in Marinomonas sp. (strain MWYL1).